The chain runs to 236 residues: Probable fimbrial chaperone EcpE (236 aa).

The first 27 residues, 1 to 27 (MFRRRGVTLTKALLTAVCMLAAPLTQA), serve as a signal peptide directing secretion.

The protein belongs to the EcpB/EcpE family.

Its function is as follows. Part of the ecpRABCDE operon, which encodes the E.coli common pilus (ECP). ECP is found in both commensal and pathogenic strains and plays a dual role in early-stage biofilm development and host cell recognition. The protein is Probable fimbrial chaperone EcpE (ecpE) of Escherichia coli (strain K12).